We begin with the raw amino-acid sequence, 436 residues long: 3-ketoacyl-CoA thiolase (436 aa).

The Acyl-thioester intermediate role is filled by cysteine 99. Active-site proton acceptor residues include histidine 392 and cysteine 422.

Belongs to the thiolase-like superfamily. Thiolase family. In terms of assembly, heterotetramer of two alpha chains (FadJ) and two beta chains (FadI).

The protein resides in the cytoplasm. It carries out the reaction an acyl-CoA + acetyl-CoA = a 3-oxoacyl-CoA + CoA. Its pathway is lipid metabolism; fatty acid beta-oxidation. Functionally, catalyzes the final step of fatty acid oxidation in which acetyl-CoA is released and the CoA ester of a fatty acid two carbons shorter is formed. In Salmonella heidelberg (strain SL476), this protein is 3-ketoacyl-CoA thiolase.